Reading from the N-terminus, the 1433-residue chain is DNA-directed RNA polymerase subunit beta' (1433 aa).

Positions 66, 68, 81, and 84 each coordinate Zn(2+). Residues aspartate 473, aspartate 475, and aspartate 477 each contribute to the Mg(2+) site. Positions 815, 889, 896, and 899 each coordinate Zn(2+).

This sequence belongs to the RNA polymerase beta' chain family. As to quaternary structure, the RNAP catalytic core consists of 2 alpha, 1 beta, 1 beta' and 1 omega subunit. When a sigma factor is associated with the core the holoenzyme is formed, which can initiate transcription. Requires Mg(2+) as cofactor. It depends on Zn(2+) as a cofactor.

It catalyses the reaction RNA(n) + a ribonucleoside 5'-triphosphate = RNA(n+1) + diphosphate. Functionally, DNA-dependent RNA polymerase catalyzes the transcription of DNA into RNA using the four ribonucleoside triphosphates as substrates. The chain is DNA-directed RNA polymerase subunit beta' from Porphyromonas gingivalis (strain ATCC BAA-308 / W83).